The sequence spans 453 residues: F-box/FBD/LRR-repeat protein At4g00160 (453 aa).

In terms of domain architecture, F-box spans 15 to 68; that stretch reads KDRISELPDALLIKILSFLPTKIVVATSVFSKQWRPLWKLVPNLEFDSEDYDDK. LRR repeat units follow at residues 89 to 111, 165 to 190, 215 to 239, 247 to 270, 282 to 307, and 331 to 358; these read LESF…LWVG, MKSL…LLSG, VPSL…VINA, IEDL…IFDG, LTSV…IFYQ, and SPKL…KWNE. One can recognise an FBD domain in the interval 355 to 406; sequence KWNEPKYVPECLLSHLETFVWRRFDWGREEEKEIATYILKNARRLNKATFST.

The polypeptide is F-box/FBD/LRR-repeat protein At4g00160 (Arabidopsis thaliana (Mouse-ear cress)).